The following is a 517-amino-acid chain: MSQFMIRYQIINLSKVFNSPKSLNFIKRYTTSTASTTTTTTNDDSNWISTPNITVCGIGGGGCNSVNNMINKELYGIDFVVANTDAQALAISCSRKMVQLGKTLTRGLGAGAVPEVGKKATEESIEELMNQIGDTQMLFVTAGMGGGTGTGGAAVIASAAKAKGILTVGIVTKPFHFEGKHRMKLAEQGLIELEKSVDSLIVIPNEKLMEQSQELYIGNAFQMVDDVLYNSIRGISDILVKPGLINLDFADVRSIMCNSGKALMGVGEGEGKGRDAIAANIALNNPLLENINISGAKGVLLNIAGSDLKLQEVDHIVSLVSSKVDPSANIIFGSTFDQQLEGKIRVTLIVTGMDQLIQQQQQQQKQTKIESQVEQKLHSTTIVDQELKPIEPQKSIIIEEEQEEQQQPKPIIPGIFVEQELLTTTTTANITPSQQKQESLTQNNIFSPPQQQQQQPSINLQPNYQQLYQQLYQQQQQQLQQQQPISFLKRLSNLFFTNGNNNKPYNNNKNTPGSNYE.

GTP is bound by residues 60-64, 147-149, Glu-178, Arg-182, and Asp-225; these read GGGCN and GTG. Positions 496–517 are disordered; sequence FTNGNNNKPYNNNKNTPGSNYE. The segment covering 497 to 517 has biased composition (low complexity); sequence TNGNNNKPYNNNKNTPGSNYE.

The protein belongs to the FtsZ family.

Its subcellular location is the mitochondrion matrix. Functionally, probably involved in mitochondrion division process. When overexpressed, induces mitochondrial tubule formation. Binds to and hydrolyzes GTP. In Dictyostelium discoideum (Social amoeba), this protein is Mitochondrial division protein fszA (fszA).